We begin with the raw amino-acid sequence, 224 residues long: BTB/POZ domain-containing protein At5g48510 (224 aa).

The BTB domain maps to 24–98 (VDVMLKAKNS…ICSDGSMLSA (75 aa)).

Interacts with CUL3A.

It participates in protein modification; protein ubiquitination. May act as a substrate-specific adapter of an E3 ubiquitin-protein ligase complex (CUL3-RBX1-BTB) which mediates the ubiquitination and subsequent proteasomal degradation of target proteins. The chain is BTB/POZ domain-containing protein At5g48510 from Arabidopsis thaliana (Mouse-ear cress).